The sequence spans 302 residues: uncharacterized protein (302 aa).

The active site involves glutamate 47.

Belongs to the PhzF family.

This is an uncharacterized protein from Mesorhizobium japonicum (strain LMG 29417 / CECT 9101 / MAFF 303099) (Mesorhizobium loti (strain MAFF 303099)).